The sequence spans 361 residues: Uroporphyrinogen decarboxylase (361 aa).

Substrate-binding positions include 27 to 31, Asp77, Tyr154, Thr209, and His327; that span reads RQAGR.

This sequence belongs to the uroporphyrinogen decarboxylase family. Homodimer.

The protein localises to the cytoplasm. The enzyme catalyses uroporphyrinogen III + 4 H(+) = coproporphyrinogen III + 4 CO2. The protein operates within porphyrin-containing compound metabolism; protoporphyrin-IX biosynthesis; coproporphyrinogen-III from 5-aminolevulinate: step 4/4. Its function is as follows. Catalyzes the decarboxylation of four acetate groups of uroporphyrinogen-III to yield coproporphyrinogen-III. This chain is Uroporphyrinogen decarboxylase, found in Coxiella burnetii (strain RSA 331 / Henzerling II).